Consider the following 304-residue polypeptide: Non-specific ribonucleoside hydrolase RihC (304 aa).

Residue histidine 233 is part of the active site.

The protein belongs to the IUNH family. RihC subfamily.

Functionally, hydrolyzes both purine and pyrimidine ribonucleosides with a broad-substrate specificity. This is Non-specific ribonucleoside hydrolase RihC from Klebsiella pneumoniae subsp. pneumoniae (strain ATCC 700721 / MGH 78578).